A 114-amino-acid polypeptide reads, in one-letter code: T cell receptor beta variable 6-6 (114 aa).

The signal sequence occupies residues 1–21 (MSISLLCCAAFPLLWAGPVNA). The Ig-like domain occupies 22–114 (GVTQTPKFRI…TSVYFCASSY (93 aa)). Cysteine 42 and cysteine 110 form a disulfide bridge. N-linked (GlcNAc...) asparagine glycosylation occurs at asparagine 84.

Alpha-beta TR is a heterodimer composed of an alpha and beta chain; disulfide-linked. The alpha-beta TR is associated with the transmembrane signaling CD3 coreceptor proteins to form the TR-CD3 (TcR or TCR). The assembly of alpha-beta TR heterodimers with CD3 occurs in the endoplasmic reticulum where a single alpha-beta TR heterodimer associates with one CD3D-CD3E heterodimer, one CD3G-CD3E heterodimer and one CD247 homodimer forming a stable octameric structure. CD3D-CD3E and CD3G-CD3E heterodimers preferentially associate with TR alpha and TR beta chains, respectively. The association of the CD247 homodimer is the last step of TcR assembly in the endoplasmic reticulum and is required for transport to the cell surface.

It localises to the cell membrane. V region of the variable domain of T cell receptor (TR) beta chain that participates in the antigen recognition. Alpha-beta T cell receptors are antigen specific receptors which are essential to the immune response and are present on the cell surface of T lymphocytes. Recognize peptide-major histocompatibility (MH) (pMH) complexes that are displayed by antigen presenting cells (APC), a prerequisite for efficient T cell adaptive immunity against pathogens. Binding of alpha-beta TR to pMH complex initiates TR-CD3 clustering on the cell surface and intracellular activation of LCK that phosphorylates the ITAM motifs of CD3G, CD3D, CD3E and CD247 enabling the recruitment of ZAP70. In turn ZAP70 phosphorylates LAT, which recruits numerous signaling molecules to form the LAT signalosome. The LAT signalosome propagates signal branching to three major signaling pathways, the calcium, the mitogen-activated protein kinase (MAPK) kinase and the nuclear factor NF-kappa-B (NF-kB) pathways, leading to the mobilization of transcription factors that are critical for gene expression and essential for T cell growth and differentiation. The T cell repertoire is generated in the thymus, by V-(D)-J rearrangement. This repertoire is then shaped by intrathymic selection events to generate a peripheral T cell pool of self-MH restricted, non-autoaggressive T cells. Post-thymic interaction of alpha-beta TR with the pMH complexes shapes TR structural and functional avidity. The polypeptide is T cell receptor beta variable 6-6 (Homo sapiens (Human)).